A 259-amino-acid chain; its full sequence is L-cysteine S-thiosulfotransferase subunit SoxA (259 aa).

The N-terminal stretch at 1 to 23 (MRKLWFLPILLGAVGGVSLYAIA) is a signal peptide. The Cytochrome c domain occupies 50–135 (VYAEQGRDMF…SIATYVATLS (86 aa)). Positions 70, 73, 74, 108, 171, 174, and 175 each coordinate heme c. A substrate-binding site is contributed by R216. A heme c-binding site is contributed by C220. C220 (cysteine persulfide intermediate) is an active-site residue.

It belongs to the SoxA family. In terms of assembly, heterodimer of SoxA and SoxX. Requires heme c as cofactor. Cysteine persulfide at Cys-220.

The protein resides in the periplasm. The catalysed reaction is L-cysteinyl-[SoxY protein] + thiosulfate + 2 Fe(III)-[cytochrome c] = S-sulfosulfanyl-L-cysteinyl-[SoxY protein] + 2 Fe(II)-[cytochrome c] + 2 H(+). It catalyses the reaction S-sulfanyl-L-cysteinyl-[SoxY protein] + thiosulfate + 2 Fe(III)-[cytochrome c] = S-(2-sulfodisulfanyl)-L-cysteinyl-[SoxY protein] + 2 Fe(II)-[cytochrome c] + 2 H(+). Functionally, C-type diheme cytochrome, which is part of the SoxAX cytochrome complex involved in sulfur oxidation. The SoxAX complex catalyzes the formation of a heterodisulfide bond between the conserved cysteine residue on a sulfur carrier SoxYZ complex subunit SoxY and thiosulfate or other inorganic sulfur substrates. This leads to the liberation of two electrons, which may be transferred from the SoxAX complex to another cytochrome c that then channels them into the respiratory electron transport chain. Some electrons may be used for reductive CO(2) fixation. The protein is L-cysteine S-thiosulfotransferase subunit SoxA of Hydrogenobacter thermophilus (strain DSM 6534 / IAM 12695 / TK-6).